Consider the following 378-residue polypeptide: MAMWRAPSAAGQLLGRALASTAAQTSAGSKKVVGVFYKGGEYADKNPNFVGCVDSALGIRGWLESKGHRYIVTDDKEGINCELEKHIEDAHVLITTPFHPAYITAERIKKAKNLELLLTAGVGSDHIDLPAAAAAGLTVAEITGSNTVSVAEDQLMRILLLLRNFLPGHHQIVNGEWNVAGIAHRTYDLEGKTVGTVGAGRIGRLLLQRLKPFNCNLMYHDRVKIDPELEKEIGAKYEEDLDAMLPKCDVVVINMPLTEKTRGMFNKERIAKMKKGVTIVNNARGAIMDTQAVADACASGHVAGYGGDVWFPQPAPKDHPWRYMPNHAMTPHCSGTTIDGQLRYAAGVKDMLDRYFKGEDFPAQNYIVKAGQLASQYQ.

Residues Met-1 to Leu-18 constitute a mitochondrion transit peptide. Residues Val-122 and Asn-146 each coordinate substrate. Residues Thr-147, Arg-201–Ile-202, Asp-221, Pro-256–Lys-260, Asn-282, Asp-308, and His-332–Gly-335 each bind NAD(+).

Belongs to the D-isomer specific 2-hydroxyacid dehydrogenase family. FDH subfamily. In terms of assembly, homodimer.

Its subcellular location is the mitochondrion. The enzyme catalyses formate + NAD(+) = CO2 + NADH. Catalyzes the NAD(+)-dependent oxidation of formate to carbon dioxide. Involved in the cell stress response. This chain is Formate dehydrogenase 2, mitochondrial, found in Oryza sativa subsp. japonica (Rice).